Reading from the N-terminus, the 191-residue chain is General negative regulator of transcription subunit 2 (191 aa).

Belongs to the CNOT2/3/5 family. In terms of assembly, forms a NOT protein complex that comprises NOT1, NOT2, NOT3, NOT4 and NOT5. Subunit of the 1.0 MDa CCR4-NOT core complex that contains CCR4, CAF1, NOT1, NOT2, NOT3, NOT4, NOT5, CAF40 and CAF130. In the complex interacts with NOT1 and NOT5. The core complex probably is part of a less characterized 1.9 MDa CCR4-NOT complex.

The protein localises to the cytoplasm. It localises to the nucleus. Its function is as follows. Acts as a component of the CCR4-NOT core complex, which in the nucleus seems to be a general transcription factor, and in the cytoplasm the major mRNA deadenylase involved in mRNA turnover. NOT2 is required for the integrity of the complex. The NOT protein subcomplex negatively regulates the basal and activated transcription of many genes. Preferentially affects TC-type TATA element-dependent transcription. Could directly or indirectly inhibit component(s) of the general transcription machinery. The sequence is that of General negative regulator of transcription subunit 2 (CDC36) from Saccharomyces cerevisiae (strain ATCC 204508 / S288c) (Baker's yeast).